Consider the following 666-residue polypeptide: MAMTWIVFSLWPLTVFMGHIGGHSLFSCEPITLRMCQDLPYNTTFMPNLLNHYDQQTAALAMEPFHPMVNLDCSRDFRPFLCALYAPICMEYGRVTLPCRRLCQRAYSECSKLMEMFGVPWPEDMECSRFPDCDEPYPRLVDLNLAGEPTEGAPVAVQRDYGFWCPRELKIDPDLGYSFLHVRDCSPPCPNMYFRREELSFARYFIGLISIICLSATLFTFLTFLIDVTRFRYPERPIIFYAVCYMMVSLIFFIGFLLEDRVACNASIPAQYKASTVTQGSHNKACTMLFMILYFFTMAGSVWWVILTITWFLAAVPKWGSEAIEKKALLFHASAWGIPGTLTIILLAMNKIEGDNISGVCFVGLYDVDALRYFVLAPLCLYVVVGVSLLLAGIISLNRVRIEIPLEKENQDKLVKFMIRIGVFSILYLVPLLVVIGCYFYEQAYRGIWETTWIQERCREYHIPCPYQVTQMSRPDLILFLMKYLMALIVGIPSVFWVGSKKTCFEWASFFHGRRKKEIVNESRQVLQEPDFAQSLLRDPNTPIIRKSRGTSTQGTSTHASSTQLAMVDDQRSKAGSIHSKVSSYHGSLHRSRDGRYTPCSYRGMEERLPHGSMSRLTDHSRHSSSHRLNEQSRHSSIRDLSNNPMTHITHGTSMNRVIEEDGTSA.

A signal peptide spans Met-1–Gly-22. The FZ domain occupies His-23–Pro-136. Topologically, residues His-23 to Phe-205 are extracellular. 5 cysteine pairs are disulfide-bonded: Cys-28-Cys-89, Cys-36-Cys-82, Cys-73-Cys-110, Cys-99-Cys-133, and Cys-103-Cys-127. A glycan (N-linked (GlcNAc...) asparagine) is linked at Asn-42. Residues Ile-206–Ile-226 form a helical membrane-spanning segment. At Asp-227–Pro-237 the chain is on the cytoplasmic side. Residues Ile-238–Leu-258 traverse the membrane as a helical segment. Residues Glu-259–Met-288 lie on the Extracellular side of the membrane. N-linked (GlcNAc...) asparagine glycosylation is present at Asn-265. A helical transmembrane segment spans residues Leu-289–Ile-309. Topologically, residues Thr-310–Ala-328 are cytoplasmic. The helical transmembrane segment at Leu-329 to Met-349 threads the bilayer. The Extracellular portion of the chain corresponds to Asn-350 to Phe-374. The N-linked (GlcNAc...) asparagine glycan is linked to Asn-356. Residues Val-375–Ile-395 traverse the membrane as a helical segment. The Cytoplasmic portion of the chain corresponds to Ser-396–Arg-420. Residues Ile-421–Tyr-441 traverse the membrane as a helical segment. Topologically, residues Glu-442–Leu-477 are extracellular. Residues Ile-478 to Val-498 form a helical membrane-spanning segment. At Gly-499–Ala-666 the chain is on the cytoplasmic side. The short motif at Lys-502–Trp-507 is the Lys-Thr-X-X-X-Trp motif, mediates interaction with the PDZ domain of Dvl family members element. The interval Arg-538–Ala-666 is disordered. A compositionally biased stretch (polar residues) spans Gly-550 to Leu-565. Positions Leu-617–Ile-638 are enriched in basic and acidic residues. A compositionally biased stretch (polar residues) spans Arg-639–Asn-656.

This sequence belongs to the G-protein coupled receptor Fz/Smo family. Interacts with VANGL2. Ubiquitinated by ZNRF3, leading to its degradation by the proteasome. As to expression, widely expressed. Relatively high expression in the CNS, including regions of the limbic system, in kidney, pancreas, skeletal muscle, uterus and testis.

It is found in the membrane. Its subcellular location is the cell membrane. The protein localises to the cell surface. It localises to the apical cell membrane. Receptor for Wnt proteins. Most of frizzled receptors are coupled to the beta-catenin canonical signaling pathway, which leads to the activation of disheveled proteins, inhibition of GSK-3 kinase, nuclear accumulation of beta-catenin and activation of Wnt target genes. A second signaling pathway involving PKC and calcium fluxes has been seen for some family members, but it is not yet clear if it represents a distinct pathway or if it can be integrated in the canonical pathway, as PKC seems to be required for Wnt-mediated inactivation of GSK-3 kinase. Both pathways seem to involve interactions with G-proteins. Activation by Wnt5A stimulates PKC activity via a G-protein-dependent mechanism. Involved in transduction and intercellular transmission of polarity information during tissue morphogenesis and/or in differentiated tissues. Plays a role in controlling early axon growth and guidance processes necessary for the formation of a subset of central and peripheral major fiber tracts. Required for the development of major fiber tracts in the central nervous system, including: the anterior commissure, the corpus callosum, the thalamocortical, corticothalamic and nigrostriatal tracts, the corticospinal tract, the fasciculus retroflexus, the mammillothalamic tract, the medial lemniscus, and ascending fiber tracts from the spinal cord to the brain. In the peripheral nervous system, controls axon growth in distinct populations of cranial and spinal motor neurons, including the facial branchimotor nerve, the hypoglossal nerve, the phrenic nerve, and motor nerves innervating dorsal limbs. Involved in the migration of cranial neural crest cells. May also be implicated in the transmission of sensory information from the trunk and limbs to the brain. Controls commissural sensory axons guidance after midline crossing along the anterior-posterior axis in the developing spinal cord in a Wnt-dependent signaling pathway. Together with FZD6, is involved in the neural tube closure and plays a role in the regulation of the establishment of planar cell polarity (PCP), particularly in the orientation of asymmetric bundles of stereocilia on the apical faces of a subset of auditory and vestibular sensory cells located in the inner ear. Promotes neurogenesis by maintaining sympathetic neuroblasts within the cell cycle in a beta-catenin-dependent manner. This is Frizzled-3 (FZD3) from Homo sapiens (Human).